Consider the following 652-residue polypeptide: Forkhead box protein O1 (652 aa).

2 disordered regions span residues 1–62 (MAEA…ASAS) and 112–154 (VHPA…SSRR). Thr-24 bears the Phosphothreonine; by PKB/AKT1 or PKB/AKT2 and SGK1 mark. The segment covering 35 to 62 (SNSTTSSPAPSGGAAANPDAAASLASAS) has biased composition (low complexity). Residues 114-133 (PAPPQPPPTGPLSQPPPVPP) show a composition bias toward pro residues. The span at 134-146 (SAAAAAGPLAGQP) shows a compositional bias: low complexity. Residues 156–232 (AWGNLSYADL…VQNEGTGKSS (77 aa)) constitute a DNA-binding region (fork-head). 2 DNA-binding regions span residues 208 to 215 (NSIRHNLS) and 231 to 234 (SSWW). At Ser-209 the chain carries Phosphoserine; by STK4/MST1. 3 positions are modified to phosphoserine: Ser-215, Ser-231, and Ser-232. Disordered stretches follow at residues 231–342 (SSWW…DVHS) and 383–410 (SLTV…PNTS). Lys-242 and Lys-245 each carry N6-acetyllysine. The residue at position 246 (Ser-246) is a Phosphoserine; by CDK1. 2 positions are modified to omega-N-methylarginine; by PRMT1: Arg-248 and Arg-250. The Nuclear localization signal motif lies at 248 to 250 (RRR). Ser-253 bears the Phosphoserine; by PKB/AKT1 and SGK1 mark. N6-acetyllysine is present on residues Lys-259, Lys-262, and Lys-271. The segment covering 261 to 272 (AKSRGRAAKKKA) has biased composition (basic residues). Residues 280–562 (GPGDSPGSQF…TPVKTPLQVP (283 aa)) form a sufficient for interaction with NLK region. A phosphoserine mark is found at Ser-284 and Ser-295. The span at 306 to 323 (NWSTFRPRTSSNASTISG) shows a compositional bias: polar residues. Ser-316 carries the phosphoserine; by PKB/AKT1 or PKB/AKT2 modification. At Ser-319 the chain carries Phosphoserine; by CK1 and SGK1. At Ser-322 the chain carries Phosphoserine; by CK1. Ser-326 bears the Phosphoserine mark. Thr-330 carries the post-translational modification Phosphothreonine. The tract at residues 360–456 (SEISNPENME…GGLNQYNCAP (97 aa)) is required for interaction with RUNX2. A compositionally biased stretch (polar residues) spans 392–401 (PGSMMQQTPC). The residue at position 420 (Lys-420) is an N6-acetyllysine. Positions 459-463 (LKELL) match the Required for interaction with SIRT1 motif.

As to quaternary structure, interacts with EP300 and CREBBP; the interactions acetylate FOXO1. Interacts with the 14-3-3 proteins, YWHAG and YWHAZ; the interactions require insulin-stimulated phosphorylation on Thr-24, promote nuclear exit and loss of transcriptional activity. Interacts with SKP2; the interaction ubiquitinates FOXO1 leading to its proteasomal degradation. Interacts with PMRT1; methylates FOXO1, prevents PKB/AKT1 phosphorylation and retains FOXO1 in the nucleus. Interacts (via an N-terminal domain) with FCOR; the interaction is direct, occurs in a forskolin-independent manner and prevents SIRT1 binding to FOXO1. Interacts (via the C-terminal half) with ATF4 (via its DNA-binding domain); the interaction occurs in osteoblasts, regulates glucose homeostasis via suppression of beta-cell proliferation and subsequent decrease in insulin production. Interacts with RUNX2; the interaction inhibits RUNX2 transcriptional activity and mediates the IGF1/insulin-dependent BGLAP expression in osteoblasts. Interacts with PPP2R1A; the interaction regulates the dephosphorylation of FOXO1 at Thr-24 and Ser-253 leading to its nuclear import. Binds to CDK1. Interacts with LRPPRC. Interacts with RUNX2; the interaction inhibits RUNX2 transcriptional activity and mediates the IGF1/insulin-dependent BGLAP expression in osteoblasts. Interacts with NLK. Interacts with SIRT1; the interaction results in the deacetylation of FOXO1 leading to activation of FOXO1-mediated transcription of genes involved in DNA repair and stress resistance. The interaction requires the presence of KRIT1 and is inhibited by FCOR. Interacts with SIRT2; the interaction is disrupted in response to oxidative stress or serum deprivation, leading to increased level of acetylated FOXO1, which promotes stress-induced autophagy by stimulating E1-like activating enzyme ATG7. Interacts (acetylated form) with ATG7; the interaction is increased in response to oxidative stress or serum deprivation and promotes the autophagic process leading to cell death. Interacts (acetylated form) with PPARG. Interacts with XBP1 isoform 2; this interaction is direct and leads to FOXO1 ubiquitination and degradation via the proteasome pathway. Interacts (via the Fork-head domain) with CEBPA; the interaction increases when FOXO1 is deacetylated. Interacts with WDFY2. Forms a complex with WDFY2 and AKT1. Interacts with CRY1. Interacts with PPIA/CYPA; the interaction promotes FOXO1 dephosphorylation, nuclear accumulation and transcriptional activity. Interacts with TOX4; FOXO1 is required for full induction of TOX4-dependent activity and the interaction is inhibited by insulin. Interacts (when phosphorylated on Ser-253) with STUB1/CHIP. Phosphorylation by NLK promotes nuclear export and inhibits the transcriptional activity. In response to growth factors, phosphorylation on Thr-24, Ser-253 and Ser-319 by PKB/AKT1 promotes nuclear export and inactivation of transactivational activity. Phosphorylation on Thr-24 is required for binding 14-3-3 proteins. Phosphorylation of Ser-253 decreases DNA-binding activity and promotes the phosphorylation of Thr-24 and Ser-316, permitting phosphorylation of Ser-319 and Ser-322, probably by CDK1, leading to nuclear exclusion and loss of function. Stress signals, such as response to oxygen or nitric oxide, attenuate the PKB/AKT1-mediated phosphorylation leading to nuclear retention. Phosphorylation of Ser-326 is independent of IGF1 and leads to reduced function. Dephosphorylated on Thr-24 and Ser-253 by PP2A in beta-cells under oxidative stress leading to nuclear retention. Phosphorylation of Ser-246 by CDK1 disrupts binding of 14-3-3 proteins leading to nuclear accumulation and has no effect on DNA-binding nor transcriptional activity. Phosphorylation by STK4/MST1 on Ser-209, upon oxidative stress, inhibits binding to 14-3-3 proteins and nuclear export. PPIA/CYPA promotes its dephosphorylation on Ser-253. Post-translationally, ubiquitinated by SKP2. Ubiquitinated, leading to proteasomal degradation. Ubiquitinated by STUB1/CHIP; when Ser-253 is phosphorylated. In terms of processing, methylation inhibits PKB/AKT1-mediated phosphorylation at Ser-253, promoting nuclear retention and increasing the transcriptional activity and cell death. Methylation increased by oxidative stress. Acetylation at Lys-259 and Lys-271 are necessary for autophagic cell death induction. Deacetylated by SIRT2 in response to oxidative stress or serum deprivation, thereby negatively regulating FOXO1-mediated autophagic cell death. Once in the nucleus, acetylated by CREBBP/EP300. Acetylation diminishes the interaction with target DNA and attenuates the transcriptional activity. It increases the phosphorylation at Ser-253, and is required for the transcriptional inhibition by FCOR. Deacetylation by SIRT1 results in reactivation of the transcriptional activity. Acetylation of FOXO1 diminishes its binding to PPARG in adipocytes. Deacetylated by SIRT2; deacetylation of FOXO1 directly increases its repressive binding to PPARG and inhibits adipocyte differentiation. Oxidative stress by hydrogen peroxide treatment appears to promote deacetylation and uncoupling of insulin-induced phosphorylation. By contrast, resveratrol acts independently of acetylation. Acetylated at Lys-420, promoting its localization to the nucleus and transcription factor activity. Deacetylation at Lys-420 by SIRT6, promotes its translocation into the cytoplasm, preventing its transcription factor activity. Deacetylation and subsequent inhibition by SIRT6 has different effects depending on cell types: it inhibits gluconeogenesis in hepatocytes, promotes glucose sensing in pancreatic beta-cells and regulates lipid catabolism in brown adipocytes. Expressed in liver, white and brown adipose tissues (at protein level).

It is found in the cytoplasm. The protein localises to the nucleus. Functionally, transcription factor that is the main target of insulin signaling and regulates metabolic homeostasis in response to oxidative stress. Binds to the insulin response element (IRE) with consensus sequence 5'-TT[G/A]TTTTG-3' and the related Daf-16 family binding element (DBE) with consensus sequence 5'-TT[G/A]TTTAC-3'. Activity suppressed by insulin. Main regulator of redox balance and osteoblast numbers and controls bone mass. Orchestrates the endocrine function of the skeleton in regulating glucose metabolism. Also acts as a key regulator of chondrogenic commitment of skeletal progenitor cells in response to lipid availability: when lipids levels are low, translocates to the nucleus and promotes expression of SOX9, which induces chondrogenic commitment and suppresses fatty acid oxidation. Acts synergistically with ATF4 to suppress osteocalcin/BGLAP activity, increasing glucose levels and triggering glucose intolerance and insulin insensitivity. Also suppresses the transcriptional activity of RUNX2, an upstream activator of osteocalcin/BGLAP. Acts as an inhibitor of glucose sensing in pancreatic beta cells by acting as a transcription repressor and suppressing expression of PDX1. In hepatocytes, promotes gluconeogenesis by acting together with PPARGC1A and CEBPA to activate the expression of genes such as IGFBP1, G6PC1 and PCK1. Also promotes gluconeogenesis by directly promoting expression of PPARGC1A and G6PC1. Important regulator of cell death acting downstream of CDK1, PKB/AKT1 and STK4/MST1. Promotes neural cell death. Mediates insulin action on adipose tissue. Regulates the expression of adipogenic genes such as PPARG during preadipocyte differentiation and, adipocyte size and adipose tissue-specific gene expression in response to excessive calorie intake. Regulates the transcriptional activity of GADD45A and repair of nitric oxide-damaged DNA in beta-cells. Required for the autophagic cell death induction in response to starvation or oxidative stress in a transcription-independent manner. Mediates the function of MLIP in cardiomyocytes hypertrophy and cardiac remodeling. Positive regulator of apoptosis in cardiac smooth muscle cells as a result of its transcriptional activation of pro-apoptotic genes. Regulates endothelial cell (EC) viability and apoptosis in a PPIA/CYPA-dependent manner via transcription of CCL2 and BCL2L11 which are involved in EC chemotaxis and apoptosis. In Mus musculus (Mouse), this protein is Forkhead box protein O1 (Foxo1).